The chain runs to 148 residues: Hemoglobin subunit beta-4 (148 aa).

The Globin domain occupies 3–148 (DWTDPERSAI…VVSALGRQYH (146 aa)). Heme b is bound by residues His-64 and His-93.

It belongs to the globin family. In terms of assembly, heterotetramer of two alpha chains and two beta chains. As to expression, red blood cells.

Involved in oxygen transport from gills to the various peripheral tissues. In Oncorhynchus mykiss (Rainbow trout), this protein is Hemoglobin subunit beta-4 (hbb4).